The following is a 175-amino-acid chain: Peptide deformylase 1 (175 aa).

Fe cation-binding residues include Cys-99 and His-141. Glu-142 is a catalytic residue. Residue His-145 coordinates Fe cation.

Belongs to the polypeptide deformylase family. The cofactor is Fe(2+).

It carries out the reaction N-terminal N-formyl-L-methionyl-[peptide] + H2O = N-terminal L-methionyl-[peptide] + formate. In terms of biological role, removes the formyl group from the N-terminal Met of newly synthesized proteins. Requires at least a dipeptide for an efficient rate of reaction. N-terminal L-methionine is a prerequisite for activity but the enzyme has broad specificity at other positions. The polypeptide is Peptide deformylase 1 (Rickettsia conorii (strain ATCC VR-613 / Malish 7)).